The primary structure comprises 698 residues: Protein SST2 (698 aa).

The tract at residues Glu10–Thr203 is fungal-DR. Residue Ser252 is modified to Phosphoserine. The 86-residue stretch at Ser273–Lys358 folds into the DEP domain. The residue at position 408 (Ser408) is a Phosphoserine. The region spanning Lys420–Ser689 is the RGS domain. Residue Ser539 is modified to Phosphoserine; by MAPK. Residues Phe545 to Leu586 form a disordered region. Positions Asp551–Asp570 are enriched in low complexity. Ser587 bears the Phosphoserine mark.

Post-translationally, phosphorylated by FUS3 and KSS1.

Desensitization to alpha-factor pheromone. Is involved in regulating the signaling pathway for responding to mating pheromone. The polypeptide is Protein SST2 (SST2) (Saccharomyces cerevisiae (strain ATCC 204508 / S288c) (Baker's yeast)).